A 409-amino-acid chain; its full sequence is LL-diaminopimelate aminotransferase (409 aa).

Tyr15 and Gly42 together coordinate substrate. Pyridoxal 5'-phosphate contacts are provided by residues Tyr72, 108-109 (SK), Tyr132, Asn187, Tyr218, and 246-248 (SFS). Lys109, Tyr132, and Asn187 together coordinate substrate. An N6-(pyridoxal phosphate)lysine modification is found at Lys249. 2 residues coordinate pyridoxal 5'-phosphate: Arg257 and Asn292. Substrate is bound by residues Asn292 and Arg388.

The protein belongs to the class-I pyridoxal-phosphate-dependent aminotransferase family. LL-diaminopimelate aminotransferase subfamily. As to quaternary structure, homodimer. It depends on pyridoxal 5'-phosphate as a cofactor.

It carries out the reaction (2S,6S)-2,6-diaminopimelate + 2-oxoglutarate = (S)-2,3,4,5-tetrahydrodipicolinate + L-glutamate + H2O + H(+). Its pathway is amino-acid biosynthesis; L-lysine biosynthesis via DAP pathway; LL-2,6-diaminopimelate from (S)-tetrahydrodipicolinate (aminotransferase route): step 1/1. Functionally, involved in the synthesis of meso-diaminopimelate (m-DAP or DL-DAP), required for both lysine and peptidoglycan biosynthesis. Catalyzes the direct conversion of tetrahydrodipicolinate to LL-diaminopimelate. The chain is LL-diaminopimelate aminotransferase from Heliobacterium modesticaldum (strain ATCC 51547 / Ice1).